An 843-amino-acid chain; its full sequence is Tetratricopeptide repeat protein 7B (843 aa).

A TPR 1 repeat occupies Gln97–Thr131. Phosphoserine occurs at positions 160 and 202. TPR repeat units follow at residues Glu219–Arg252, Ser363–Glu396, Phe397–Asp430, Thr479–Asp514, Gln516–Asp548, and Ala549–Asn582. Residues Ser625, Ser629, Ser630, Ser673, Ser677, Ser678, and Ser681 each carry the phosphoserine modification. TPR repeat units follow at residues Ala696–Ser729, His730–His763, Lys765–Ala797, and His798–Ser831.

As to quaternary structure, component of a phosphatidylinositol 4-kinase (PI4K) complex, composed of PI4KA, EFR3 (EFR3A or EFR3B), TTC7 (TTC7A or TTC7B) and HYCC (HYCC1 or HYCC2). Interacts with PI4KA, interaction is direct. Interacts with EFR3 (EFR3A or EFR3B), interaction is direct. Interacts with HYCC (HYCC1 or HYCC2), interaction is direct. Association with the PI4K complex is strongly reduced by TMEM150A.

It localises to the cytoplasm. The protein resides in the cytosol. The protein localises to the cell membrane. Functionally, component of a complex required to localize phosphatidylinositol 4-kinase (PI4K) to the plasma membrane. The complex acts as a regulator of phosphatidylinositol 4-phosphate (PtdIns(4)P) synthesis. In the complex, plays a central role in bridging PI4KA to EFR3B and HYCC1, via direct interactions. This chain is Tetratricopeptide repeat protein 7B, found in Mus musculus (Mouse).